We begin with the raw amino-acid sequence, 263 residues long: Endonuclease 8 (263 aa).

The Schiff-base intermediate with DNA role is filled by proline 2. Glutamate 3 serves as the catalytic Proton donor. Lysine 53 functions as the Proton donor; for beta-elimination activity in the catalytic mechanism. 3 residues coordinate DNA: glutamine 70, arginine 125, and asparagine 169. The FPG-type zinc finger occupies 229–263; that stretch reads KVFHRDGEACERCGGIIEKTTLSSRPFYWCPHCQK. The active-site Proton donor; for delta-elimination activity is the arginine 253.

This sequence belongs to the FPG family. The cofactor is Zn(2+).

The enzyme catalyses 2'-deoxyribonucleotide-(2'-deoxyribose 5'-phosphate)-2'-deoxyribonucleotide-DNA = a 3'-end 2'-deoxyribonucleotide-(2,3-dehydro-2,3-deoxyribose 5'-phosphate)-DNA + a 5'-end 5'-phospho-2'-deoxyribonucleoside-DNA + H(+). In terms of biological role, involved in base excision repair of DNA damaged by oxidation or by mutagenic agents. Acts as a DNA glycosylase that recognizes and removes damaged bases. Has a preference for oxidized pyrimidines, such as thymine glycol, 5,6-dihydrouracil and 5,6-dihydrothymine. Has AP (apurinic/apyrimidinic) lyase activity and introduces nicks in the DNA strand. Cleaves the DNA backbone by beta-delta elimination to generate a single-strand break at the site of the removed base with both 3'- and 5'-phosphates. The protein is Endonuclease 8 of Salmonella paratyphi B (strain ATCC BAA-1250 / SPB7).